The primary structure comprises 662 residues: Probable quinol oxidase subunit 1 (662 aa).

The next 2 membrane-spanning stretches (helical) occupy residues 14-34 and 58-78; these read WMIT…IAVI and IMYL…ALLI. H102 contacts Fe(II)-heme a. The next 8 membrane-spanning stretches (helical) occupy residues 103-123, 140-160, 187-207, 228-248, 273-293, 311-331, 336-356, and 376-396; these read GVIM…NIVV, VSFW…IIGG, IAIQ…FVTI, FITT…LALM, FFWV…FGIY, MVWA…HHFF, GALI…PTGV, and MLFS…GVML. Cu cation is bound by residues H279, Y283, H328, and H329. The 1'-histidyl-3'-tyrosine (His-Tyr) cross-link spans 279 to 283; it reads HPEVY. H414 lines the heme a3 pocket. Helical transmembrane passes span 415–435, 451–471, 493–513, 587–604, and 608–627; these read FHYT…IFWY, CFWF…ILGL, ISTI…VSIV, PVGF…FFLI, and VIPA…YRSF. H416 contributes to the Fe(II)-heme a binding site.

The protein belongs to the heme-copper respiratory oxidase family. The cofactor is Cu cation. Ferriheme a serves as cofactor. It depends on Heme A3. as a cofactor.

It localises to the cell membrane. The enzyme catalyses 2 a quinol + O2 = 2 a quinone + 2 H2O. It participates in energy metabolism; oxidative phosphorylation. Catalyzes quinol oxidation with the concomitant reduction of oxygen to water. This Staphylococcus aureus (strain MRSA252) protein is Probable quinol oxidase subunit 1 (qoxB).